A 457-amino-acid polypeptide reads, in one-letter code: Allantoinase (457 aa).

Positions 58, 60, 145, 181, 237, and 310 each coordinate Zn(2+). N6-carboxylysine is present on lysine 145.

It belongs to the metallo-dependent hydrolases superfamily. Allantoinase family. As to quaternary structure, homotetramer. Zn(2+) serves as cofactor. In terms of processing, carboxylation allows a single lysine to coordinate two zinc ions.

The catalysed reaction is (S)-allantoin + H2O = allantoate + H(+). It participates in nitrogen metabolism; (S)-allantoin degradation; allantoate from (S)-allantoin: step 1/1. In terms of biological role, catalyzes the conversion of allantoin (5-ureidohydantoin) to allantoic acid by hydrolytic cleavage of the five-member hydantoin ring. This Solibacter usitatus (strain Ellin6076) protein is Allantoinase.